The primary structure comprises 78 residues: Small ribosomal subunit protein bS18B (78 aa).

The interval 1–22 is disordered; the sequence is MPRKPVRKVASTPRPNPLDQNG.

It belongs to the bacterial ribosomal protein bS18 family. Part of the 30S ribosomal subunit. Forms a tight heterodimer with protein bS6.

Functionally, binds as a heterodimer with protein bS6 to the central domain of the 16S rRNA, where it helps stabilize the platform of the 30S subunit. This Streptomyces avermitilis (strain ATCC 31267 / DSM 46492 / JCM 5070 / NBRC 14893 / NCIMB 12804 / NRRL 8165 / MA-4680) protein is Small ribosomal subunit protein bS18B.